The primary structure comprises 33 residues: Protamine (33 aa).

The segment at 1-33 (MPRRRRSSSRPVRRRRRPRVSRRRRRRGGRRRR) is disordered.

As to expression, testis.

It is found in the nucleus. The protein localises to the chromosome. In terms of biological role, protamines substitute for histones in the chromatin of sperm during the haploid phase of spermatogenesis. They compact sperm DNA into a highly condensed, stable and inactive complex. In Oncorhynchus keta (Chum salmon), this protein is Protamine.